We begin with the raw amino-acid sequence, 1354 residues long: Tensin homolog (1354 aa).

The region spanning 38-207 (MKDRKEGVQV…GYFSSLLSGR (170 aa)) is the Phosphatase tensin-type domain. Cys144 (phosphocysteine intermediate) is an active-site residue. The C2 tensin-type domain maps to 212-337 (SDPLYLHNII…VTVELVVSHT (126 aa)). Disordered stretches follow at residues 380–442 (EYSE…DVVP), 597–616 (STLQ…RTLN), 638–660 (SNTA…SVQL), 692–720 (DVRG…NNTP), 734–754 (SVTT…EADA), 794–879 (AANN…DRQR), and 1015–1035 (NGER…HNGY). The span at 391-401 (SSKSANPINNN) shows a compositional bias: polar residues. Residues 408–417 (VGPPVPPKPS) are compositionally biased toward pro residues. 3 stretches are compositionally biased toward polar residues: residues 704 to 720 (HNAS…NNTP), 734 to 747 (SVTT…STPS), and 794 to 804 (AANNDENQHNL). The span at 821-843 (AEFRREEERLRNTRSPYGEERWR) shows a compositional bias: basic and acidic residues. A compositionally biased stretch (gly residues) spans 1017-1033 (ERGGSGHAAGGGGGGHN). The 105-residue stretch at 1083 to 1187 (WYKPTISREQ…ALPTKLVLPD (105 aa)) folds into the SH2 domain. The 145-residue stretch at 1209 to 1353 (ACNVVYVGSV…NKVMLAQKNR (145 aa)) folds into the PTB domain.

This sequence belongs to the PTEN phosphatase protein family. May interact (via SH2 domain) with receptor svh-2 (when tyrosine-phosphorylated). May interact (via C-terminus) with integrin pat-3. In terms of tissue distribution, expressed in ventral motor neurons, including ventral and dorsal D-type neurons, and in a subset of cells in the head.

It localises to the cell projection. Its subcellular location is the axon. The catalysed reaction is O-phospho-L-tyrosyl-[protein] + H2O = L-tyrosyl-[protein] + phosphate. Probable phosphatase which regulates axon regeneration after injury by linking the svh-2 and integrin signaling pathways. Functionally, not involved in axon regeneration after injury. The chain is Tensin homolog from Caenorhabditis elegans.